Reading from the N-terminus, the 246-residue chain is Phosducin (246 aa).

Residues 1-14 (MEEAKSQSLEEDFE) show a composition bias toward acidic residues. Residues 1–70 (MEEAKSQSLE…GKDSKERVSR (70 aa)) are disordered. One can recognise a Phosducin domain in the interval 1–244 (MEEAKSQSLE…LEHTKIEEED (244 aa)). Basic and acidic residues predominate over residues 60 to 69 (NGKDSKERVS). Ser73 is subject to Phosphoserine; by PKA. The thioredoxin fold stretch occupies residues 111–246 (YGFVYELETG…HTKIEEEDVE (136 aa)).

It belongs to the phosducin family. Forms a complex with the beta and gamma subunits of the GTP-binding protein, transducin. Interacts with CRX. In terms of processing, light-induced changes in cyclic nucleotide levels modulate the phosphorylation of this protein by cAMP kinase.

It is found in the cytoplasm. Its subcellular location is the cytosol. The protein localises to the nucleus. It localises to the cell projection. The protein resides in the cilium. It is found in the photoreceptor outer segment. Its subcellular location is the photoreceptor inner segment. Functionally, may participate in the regulation of visual phototransduction or in the integration of photoreceptor metabolism. Inhibits the transcriptional activation activity of the cone-rod homeobox CRX. This Homo sapiens (Human) protein is Phosducin (PDC).